Reading from the N-terminus, the 390-residue chain is Probable inactive secreted aspartyl protease (390 aa).

Residues 1 to 20 (MQLTIKALVGILTTISAATA) form the signal peptide. A propeptide spans 21 to 69 (VSFDMENLGAEKRGVSGEELHMLHGNEVLARFANGVYPEVANGTRVSKR) (removed in mature form). The N-linked (GlcNAc...) asparagine glycan is linked to N62. The Peptidase A1 domain occupies 86-388 (WAVKAKIGSN…KFDSNEMQIA (303 aa)). Catalysis depends on residues D104 and D273. The cysteines at positions 313 and 346 are disulfide-linked.

Belongs to the peptidase A1 family.

Its subcellular location is the secreted. In terms of biological role, probable inactive secreted aspartyl protease. May promote an inflammatory immune response in the host when the host skin barrier is breached. Has no detectable protease activity in vitro on fluorogenic substrates, a peptide library, or with the general protease substrate casein. The presence of the enzyme also does not affect the activity of the secreted aspartyl protease SAP1. The chain is Probable inactive secreted aspartyl protease from Malassezia globosa (strain ATCC MYA-4612 / CBS 7966) (Dandruff-associated fungus).